The primary structure comprises 140 residues: Large ribosomal subunit protein uL11 (140 aa).

It belongs to the universal ribosomal protein uL11 family. In terms of assembly, part of the ribosomal stalk of the 50S ribosomal subunit. Interacts with L10 and the large rRNA to form the base of the stalk. L10 forms an elongated spine to which L12 dimers bind in a sequential fashion forming a multimeric L10(L12)X complex. Post-translationally, one or more lysine residues are methylated.

Functionally, forms part of the ribosomal stalk which helps the ribosome interact with GTP-bound translation factors. The sequence is that of Large ribosomal subunit protein uL11 from Nitratidesulfovibrio vulgaris (strain DSM 19637 / Miyazaki F) (Desulfovibrio vulgaris).